Consider the following 426-residue polypeptide: Endothelin-1 receptor (426 aa).

The signal sequence occupies residues 1–20 (MGVLCFLASFWLALVGGAIA). Over 21–80 (DNAERYSANLSSHVEDFTPFPGTEFNFLGTTLQPPNLALPSNGSMHGYCPQQTKITTAFK) the chain is Extracellular. N-linked (GlcNAc...) asparagine glycosylation is found at asparagine 29 and asparagine 62. The chain crosses the membrane as a helical span at residues 81 to 102 (YINTVISCTIFIVGMVGNATLL). The Cytoplasmic segment spans residues 103-112 (RIIYQNKCMR). The helical transmembrane segment at 113–132 (NGPNALIASLALGDLIYVVI) threads the bilayer. Residues 133–159 (DLPINVFKLLAGRWPFDHNDFGVFLCK) are Extracellular-facing. A disulfide bridge links cysteine 158 with cysteine 239. Residues 160–181 (LFPFLQKSSVGITVLNLCALSV) traverse the membrane as a helical segment. Residues 182–205 (DRYRAVASWSRVQGIGIPLITAIE) lie on the Cytoplasmic side of the membrane. The chain crosses the membrane as a helical span at residues 206–229 (IVSIWILSFILAIPEAIGFVMVPF). The Extracellular portion of the chain corresponds to 230-256 (EYKGEQHRTCMLNATTKFMEFYQDVKD). A helical transmembrane segment spans residues 257 to 278 (WWLFGFYFCMPLVCTAIFYTLM). Residues 279-306 (TCEMLNRRNGSLRIALSEHLKQRREVAK) are Cytoplasmic-facing. A helical transmembrane segment spans residues 307–328 (TVFCLVVIFALCWFPLHLSRIL). The Extracellular portion of the chain corresponds to 329–347 (KKTVYDEMDKNRCELLSFL). Residues 348-372 (LLMDYIGINLATMNSCINPIALYFV) form a helical membrane-spanning segment. Over 373-426 (SKKFKNCFQSCLCCCCHQSKSLMTSVPMNGTSIQWKNQEQNHNTERSSHKDSMN) the chain is Cytoplasmic. Position 424 is a phosphoserine (serine 424).

This sequence belongs to the G-protein coupled receptor 1 family. Endothelin receptor subfamily. EDNRA sub-subfamily. Interacts with HDAC7 and KAT5. In terms of tissue distribution, predominantly expressed in vascular smooth muscle cells of a variety of issues, bronchial smooth muscle cells, myocardium, and the pituitary gland.

Its subcellular location is the cell membrane. In terms of biological role, receptor for endothelin-1. Mediates its action by association with G proteins that activate a phosphatidylinositol-calcium second messenger system. The rank order of binding affinities for ET-A is: ET1 &gt; ET2 &gt;&gt; ET3. The polypeptide is Endothelin-1 receptor (Rattus norvegicus (Rat)).